The chain runs to 631 residues: Phosphomethylpyrimidine synthase (631 aa).

Substrate is bound by residues N231, M260, Y289, H325, 345-347 (SRG), 386-389 (DGLR), and E425. A Zn(2+)-binding site is contributed by H429. Y452 is a substrate binding site. Residue H493 participates in Zn(2+) binding. Residues C573, C576, and C581 each coordinate [4Fe-4S] cluster.

This sequence belongs to the ThiC family. In terms of assembly, homodimer. It depends on [4Fe-4S] cluster as a cofactor.

It carries out the reaction 5-amino-1-(5-phospho-beta-D-ribosyl)imidazole + S-adenosyl-L-methionine = 4-amino-2-methyl-5-(phosphooxymethyl)pyrimidine + CO + 5'-deoxyadenosine + formate + L-methionine + 3 H(+). It participates in cofactor biosynthesis; thiamine diphosphate biosynthesis. Its function is as follows. Catalyzes the synthesis of the hydroxymethylpyrimidine phosphate (HMP-P) moiety of thiamine from aminoimidazole ribotide (AIR) in a radical S-adenosyl-L-methionine (SAM)-dependent reaction. The chain is Phosphomethylpyrimidine synthase from Acinetobacter baylyi (strain ATCC 33305 / BD413 / ADP1).